We begin with the raw amino-acid sequence, 782 residues long: Nucleolar RNA helicase 2 (782 aa).

The disordered stretch occupies residues 1 to 184 (MPGKLRSASK…IPVEQKEGAF (184 aa)). Phosphoserine is present on residues S7 and S13. 2 stretches are compositionally biased toward basic and acidic residues: residues 26-42 (PSEKKTRKEKPKSKTDE) and 99-117 (EPLEKKAPSAKTKEMKAEE). An N6-acetyllysine modification is found at K39. K114 participates in a covalent cross-link: Glycyl lysine isopeptide (Lys-Gly) (interchain with G-Cter in SUMO1); alternate. K114 is covalently cross-linked (Glycyl lysine isopeptide (Lys-Gly) (interchain with G-Cter in SUMO2); alternate). At S119 the chain carries Phosphoserine. The span at 134–143 (GKEANGDVGE) shows a compositional bias: basic and acidic residues. An N6-acetyllysine modification is found at K135. Residues S145 and S169 each carry the phosphoserine modification. Basic and acidic residues predominate over residues 172-181 (EKEIPVEQKE). The short motif at 182–210 (GAFSNFPISEETVKLLKARGVNFLFPIQA) is the Q motif element. Residues 213 to 392 (FHHVYSGKDL…KKYMKSTYEQ (180 aa)) form the Helicase ATP-binding domain. 226–233 (ARTGTGKT) lines the ATP pocket. T292 carries the phosphothreonine modification. The short motif at 335 to 338 (DEVD) is the DEAD box element. A Helicase C-terminal domain is found at 425–569 (DVIRVYSGHQ…GVPSATEIIK (145 aa)). A Phosphoserine modification is found at S563. The residue at position 596 (K596) is an N6-acetyllysine. The segment at 704–782 (ATEQPELEGP…KRSFSKAFGQ (79 aa)) is disordered. Repeat copies occupy residues 720-724 (GRGQR), 731-735 (FRGQR), and 741-747 (FRGQGQR). Residues 720–747 (GRGQRDGSRGSFRGQRGGSRNFRGQGQR) are 3 X 5 AA repeats. Positions 728-756 (RGSFRGQRGGSRNFRGQGQRGGSRNFRGQ) are enriched in low complexity. The residue at position 778 (K778) is an N6-acetyllysine.

It belongs to the DEAD box helicase family. DDX21/DDX50 subfamily. In terms of assembly, homodimer; homodimerizes via its N-terminus. Found in a multi-helicase-TICAM1 complex at least composed of DHX36, DDX1, DDX21 and TICAM1; this complex exists in resting cells with or without poly(I:C) RNA ligand stimulation. Interacts (via C-terminus) with TICAM1 (via TIR domain). Interacts with DHX36 (via C-terminus); this interaction serves as bridges to TICAM1. Interacts (via C-terminus) with DDX1 (via B30.2/SPRY domain); this interaction serves as bridges to TICAM1. Component of the B-WICH complex, at least composed of SMARCA5/SNF2H, BAZ1B/WSTF, SF3B1, DEK, MYO1C, ERCC6, MYBBP1A and DDX21. Interacts with C1QBP. Interacts with JUN. Interacts with WDR46. Interacts with MCM3AP. Interacts with WDR43. Interacts with KPNA3. Interacts with GID4. Post-translationally, acetylation by CREBBP/CBP inhibits the helicase activity. Deacetylation by SIRT7 promotes the helicase activity and overcomes R-loop-mediated stalling of RNA polymerases.

The protein resides in the nucleus. Its subcellular location is the nucleolus. The protein localises to the nucleoplasm. It localises to the cytoplasm. It is found in the cytosol. The protein resides in the mitochondrion. It carries out the reaction ATP + H2O = ADP + phosphate + H(+). With respect to regulation, acetylation inhibits the helicase activity. RNA helicase that acts as a sensor of the transcriptional status of both RNA polymerase (Pol) I and II: promotes ribosomal RNA (rRNA) processing and transcription from polymerase II (Pol II). Binds various RNAs, such as rRNAs, snoRNAs, 7SK and, at lower extent, mRNAs. In the nucleolus, localizes to rDNA locus, where it directly binds rRNAs and snoRNAs, and promotes rRNA transcription, processing and modification. Required for rRNA 2'-O-methylation, possibly by promoting the recruitment of late-acting snoRNAs SNORD56 and SNORD58 with pre-ribosomal complexes. In the nucleoplasm, binds 7SK RNA and is recruited to the promoters of Pol II-transcribed genes: acts by facilitating the release of P-TEFb from inhibitory 7SK snRNP in a manner that is dependent on its helicase activity, thereby promoting transcription of its target genes. Functions as a cofactor for JUN-activated transcription: required for phosphorylation of JUN at 'Ser-77'. Can unwind double-stranded RNA (helicase) and can fold or introduce a secondary structure to a single-stranded RNA (foldase). Together with SIRT7, required to prevent R-loop-associated DNA damage and transcription-associated genomic instability: deacetylation by SIRT7 activates the helicase activity, thereby overcoming R-loop-mediated stalling of RNA polymerases. Involved in rRNA processing. May bind to specific miRNA hairpins. Component of a multi-helicase-TICAM1 complex that acts as a cytoplasmic sensor of viral double-stranded RNA (dsRNA) and plays a role in the activation of a cascade of antiviral responses including the induction of pro-inflammatory cytokines via the adapter molecule TICAM1. This Rattus norvegicus (Rat) protein is Nucleolar RNA helicase 2 (Ddx21).